A 156-amino-acid polypeptide reads, in one-letter code: Small ribosomal subunit protein uS7 (156 aa).

The protein belongs to the universal ribosomal protein uS7 family. As to quaternary structure, part of the 30S ribosomal subunit. Contacts proteins S9 and S11.

In terms of biological role, one of the primary rRNA binding proteins, it binds directly to 16S rRNA where it nucleates assembly of the head domain of the 30S subunit. Is located at the subunit interface close to the decoding center, probably blocks exit of the E-site tRNA. The polypeptide is Small ribosomal subunit protein uS7 (Micrococcus luteus (strain ATCC 4698 / DSM 20030 / JCM 1464 / CCM 169 / CCUG 5858 / IAM 1056 / NBRC 3333 / NCIMB 9278 / NCTC 2665 / VKM Ac-2230) (Micrococcus lysodeikticus)).